The following is a 201-amino-acid chain: Auxin-binding protein 1 (201 aa).

The first 38 residues, 1–38, serve as a signal peptide directing secretion; it reads MAPDLSELAAAAAARGAYLAGVGVAVLLAASFLPVAES. C40 and C193 are joined by a disulfide. Zn(2+) is bound by residues H95, H97, and E101. Residue N133 is glycosylated (N-linked (GlcNAc...) asparagine). H144 contacts Zn(2+). The short motif at 198–201 is the Prevents secretion from ER element; sequence KDEL.

Homodimer. In terms of processing, glycosylated. Expressed in roots, coleoptiles, leaves, stems, tassels and ears.

The protein localises to the endoplasmic reticulum lumen. Its function is as follows. Receptor for the plant hormone auxin. This is Auxin-binding protein 1 from Zea mays (Maize).